The following is a 104-amino-acid chain: Gastrin (104 aa).

The N-terminal stretch at 1–21 (MQRLCVCVLILALALTAFSEA) is a signal peptide. A disordered region spans residues 22-49 (SWKPRSQLQDAPSGPGANGGLEPHWLNR). Residues 22-58 (SWKPRSQLQDAPSGPGANGGLEPHWLNRLGPASHHRW) constitute a propeptide that is removed on maturation. A pyrrolidone carboxylic acid mark is found at glutamine 59 and glutamine 76. At tyrosine 87 the chain carries Sulfotyrosine. Phenylalanine 92 carries the post-translational modification Phenylalanine amide. Residue serine 96 is modified to Phosphoserine. The propeptide occupies 96 to 104 (SAEDGDQHP).

This sequence belongs to the gastrin/cholecystokinin family.

It is found in the secreted. Functionally, gastrin stimulates the stomach mucosa to produce and secrete hydrochloric acid and the pancreas to secrete its digestive enzymes. It also stimulates smooth muscle contraction and increases blood circulation and water secretion in the stomach and intestine. The protein is Gastrin (GAST) of Felis catus (Cat).